The following is a 470-amino-acid chain: Protein C-ets-2 (470 aa).

Residues 85-170 (ATFSGFKKEQ…EHLEQMIKEN (86 aa)) form the PNT domain. Position 225 is a phosphoserine (Ser-225). A disordered region spans residues 270–291 (ASGKPRDHDSAETGGDSFESSE). 3 positions are modified to phosphoserine: Ser-296, Ser-299, and Ser-302. The ETS DNA-binding region spans 364-444 (IQLWQFLLEL…SGKRYVYRFV (81 aa)).

Belongs to the ETS family. In terms of processing, phosphorylation by CDK10 at Ser-225 may create a phosphodegron that targets ETS2 for proteasomal degradation.

The protein resides in the nucleus. In terms of biological role, transcription factor activating transcription. Binds specifically the GGA DNA motif in gene promoters and stimulates transcription of those genes. The sequence is that of Protein C-ets-2 (ETS2) from Bos taurus (Bovine).